Here is a 171-residue protein sequence, read N- to C-terminus: Replication restart protein PriC (171 aa).

This sequence belongs to the PriC family. In terms of assembly, monomer. Component of the replication restart primosome, which is composed of PriA, PriB, PriC, DnaBe and DnaT; DnaG primase associates transiently with this complex. Interacts with the C-terminus of SSB. SSB interaction is required to load the main replicative helicase onto substrate replication forks. Interacts with helicase DnaB alone and in the DnaB-DnaC complex, probably 1:1 binding with DnaB.

Involved in the restart of stalled replication forks, which reloads the DnaB replicative helicase on sites other than the origin of replication. In vitro can load (E.coli) DnaB replicative helicase from a DnaB-DnaC complex on a single-stranded DNA (ssDNA)-binding protein (SSB)-coated stalled replication fork with no leading- or lagging-strand in the absence of other primosome proteins (PriA, PriB or DnaT). Binds SSB (tested with E.coli protein) and ssDNA. Complements priC in an E.coli priB-priC double deletion. The sequence is that of Replication restart protein PriC from Cronobacter sakazakii (strain ATCC BAA-894) (Enterobacter sakazakii).